A 141-amino-acid chain; its full sequence is Alpha-lactalbumin (141 aa).

An N-terminal signal peptide occupies residues 1–19 (MMPLVPLLLVSIVFPGIQA). In terms of domain architecture, C-type lysozyme spans 20-141 (TQLTRCELTE…ENLEQWVCKK (122 aa)). 4 cysteine pairs are disulfide-bonded: Cys25-Cys139, Cys47-Cys130, Cys80-Cys96, and Cys92-Cys110. An N-linked (GlcNAc...) asparagine glycan is attached at Asn64. Residues Asp101, Asp106, and Asp107 each contribute to the Ca(2+) site.

The protein belongs to the glycosyl hydrolase 22 family. Lactose synthase (LS) is a heterodimer of a catalytic component, beta1,4-galactosyltransferase (beta4Gal-T1) and a regulatory component, alpha-lactalbumin (LA). As to expression, mammary gland specific. Secreted in milk.

It is found in the secreted. Regulatory subunit of lactose synthase, changes the substrate specificity of galactosyltransferase in the mammary gland making glucose a good acceptor substrate for this enzyme. This enables LS to synthesize lactose, the major carbohydrate component of milk. In other tissues, galactosyltransferase transfers galactose onto the N-acetylglucosamine of the oligosaccharide chains in glycoproteins. This is Alpha-lactalbumin (LALBA) from Oryctolagus cuniculus (Rabbit).